The following is a 123-amino-acid chain: Small ribosomal subunit protein uS12 (123 aa).

Residues 1–27 (MPTIQQLIRKPRQPKIKRSKSMHLQEC) are disordered. A compositionally biased stretch (basic residues) spans 9–21 (RKPRQPKIKRSKS). 3-methylthioaspartic acid is present on Asp89.

The protein belongs to the universal ribosomal protein uS12 family. In terms of assembly, part of the 30S ribosomal subunit. Contacts proteins S8 and S17. May interact with IF1 in the 30S initiation complex.

In terms of biological role, with S4 and S5 plays an important role in translational accuracy. Its function is as follows. Interacts with and stabilizes bases of the 16S rRNA that are involved in tRNA selection in the A site and with the mRNA backbone. Located at the interface of the 30S and 50S subunits, it traverses the body of the 30S subunit contacting proteins on the other side and probably holding the rRNA structure together. The combined cluster of proteins S8, S12 and S17 appears to hold together the shoulder and platform of the 30S subunit. The protein is Small ribosomal subunit protein uS12 of Roseobacter denitrificans (strain ATCC 33942 / OCh 114) (Erythrobacter sp. (strain OCh 114)).